Consider the following 53-residue polypeptide: Small, acid-soluble spore protein O (53 aa).

Positions 1–53 (MVRKKANHSRPGMNAAKAQGKDAGLTSQFHAEIGQEPLNQAQRQNNKKRKKNQ) are disordered.

This sequence belongs to the SspO family.

It is found in the spore core. This Halalkalibacterium halodurans (strain ATCC BAA-125 / DSM 18197 / FERM 7344 / JCM 9153 / C-125) (Bacillus halodurans) protein is Small, acid-soluble spore protein O.